A 285-amino-acid chain; its full sequence is TATA box-binding protein-associated factor RNA polymerase I subunit D (285 aa).

2 disordered regions span residues 1-49 (MAQS…RIPT) and 85-112 (KKKR…TRNI). The segment covering 21–39 (GNQSDDSSNSSLFKTQCVP) has biased composition (polar residues). The residue at position 24 (Ser-24) is a Phosphoserine. A compositionally biased stretch (basic residues) spans 85–104 (KKKRKKRKKRKYKPKLRRQG). The residue at position 134 (Ser-134) is a Phosphoserine. Positions 193 to 219 (HKYMDDDGPLSPIEEPSTEDEATDPQS) are disordered. Residue Ser-229 is modified to Phosphoserine. Basic and acidic residues-rich tracts occupy residues 242–264 (NLEQ…KDAT) and 273–285 (KGGE…SEVS). The interval 242 to 285 (NLEQGKIKKESAFSKKSKAKDATQRGNRRSWKGGEHACLHSEVS) is disordered.

As to quaternary structure, component of the transcription factor SL1/TIF-IB complex, composed of TBP and at least TAF1A, TAF1B, TAF1C and TAF1D. Interacts with UBTF.

It localises to the nucleus. Its function is as follows. Component of the transcription factor SL1/TIF-IB complex, which is involved in the assembly of the PIC (preinitiation complex) during RNA polymerase I-dependent transcription. The rate of PIC formation probably is primarily dependent on the rate of association of SL1/TIF-IB with the rDNA promoter. SL1/TIF-IB is involved in stabilization of nucleolar transcription factor 1/UBTF on rDNA. Formation of SL1/TIF-IB excludes the association of TBP with TFIID subunits. This chain is TATA box-binding protein-associated factor RNA polymerase I subunit D (Taf1d), found in Rattus norvegicus (Rat).